Consider the following 123-residue polypeptide: Alpha-lactalbumin (123 aa).

The C-type lysozyme domain occupies 1 to 123 (KQFTKCELSQ…KLEQWLCEKE (123 aa)). 4 disulfides stabilise this stretch: Cys-6–Cys-120, Cys-28–Cys-111, Cys-61–Cys-77, and Cys-73–Cys-91. The N-linked (GlcNAc...) asparagine glycan is linked to Asn-45. 5 residues coordinate Ca(2+): Lys-79, Asp-82, Asp-84, Asp-87, and Asp-88.

The protein belongs to the glycosyl hydrolase 22 family. In terms of assembly, lactose synthase (LS) is a heterodimer of a catalytic component, beta1,4-galactosyltransferase (beta4Gal-T1) and a regulatory component, alpha-lactalbumin (LA). In terms of tissue distribution, mammary gland specific. Secreted in milk.

The protein resides in the secreted. In terms of biological role, regulatory subunit of lactose synthase, changes the substrate specificity of galactosyltransferase in the mammary gland making glucose a good acceptor substrate for this enzyme. This enables LS to synthesize lactose, the major carbohydrate component of milk. In other tissues, galactosyltransferase transfers galactose onto the N-acetylglucosamine of the oligosaccharide chains in glycoproteins. The chain is Alpha-lactalbumin (LALBA) from Papio cynocephalus (Yellow baboon).